The primary structure comprises 345 residues: Phosphoribosylformylglycinamidine cyclo-ligase (345 aa).

The protein belongs to the AIR synthase family.

It localises to the cytoplasm. It catalyses the reaction 2-formamido-N(1)-(5-O-phospho-beta-D-ribosyl)acetamidine + ATP = 5-amino-1-(5-phospho-beta-D-ribosyl)imidazole + ADP + phosphate + H(+). The protein operates within purine metabolism; IMP biosynthesis via de novo pathway; 5-amino-1-(5-phospho-D-ribosyl)imidazole from N(2)-formyl-N(1)-(5-phospho-D-ribosyl)glycinamide: step 2/2. This Anaeromyxobacter sp. (strain K) protein is Phosphoribosylformylglycinamidine cyclo-ligase.